The chain runs to 543 residues: Chaperonin GroEL (543 aa).

Residues 30–33 (TLGP), Lys51, 87–91 (DGTTT), Gly415, and Asp496 each bind ATP.

It belongs to the chaperonin (HSP60) family. As to quaternary structure, forms a cylinder of 14 subunits composed of two heptameric rings stacked back-to-back. Interacts with the co-chaperonin GroES.

It is found in the cytoplasm. The enzyme catalyses ATP + H2O + a folded polypeptide = ADP + phosphate + an unfolded polypeptide.. Functionally, together with its co-chaperonin GroES, plays an essential role in assisting protein folding. The GroEL-GroES system forms a nano-cage that allows encapsulation of the non-native substrate proteins and provides a physical environment optimized to promote and accelerate protein folding. The sequence is that of Chaperonin GroEL from Gluconobacter oxydans (strain 621H) (Gluconobacter suboxydans).